The primary structure comprises 117 residues: Basic phospholipase A2 pseudexin B chain (117 aa).

Disulfide bonds link cysteine 11–cysteine 71, cysteine 27–cysteine 117, cysteine 29–cysteine 45, cysteine 44–cysteine 98, cysteine 51–cysteine 91, cysteine 60–cysteine 84, and cysteine 78–cysteine 89. Ca(2+) is bound by residues tyrosine 28, glycine 30, and glycine 32. Histidine 48 is a catalytic residue. Aspartate 49 provides a ligand contact to Ca(2+). Aspartate 92 is a catalytic residue.

This sequence belongs to the phospholipase A2 family. Group I subfamily. D49 sub-subfamily. Ca(2+) is required as a cofactor. In terms of tissue distribution, expressed by the venom gland.

It is found in the secreted. The enzyme catalyses a 1,2-diacyl-sn-glycero-3-phosphocholine + H2O = a 1-acyl-sn-glycero-3-phosphocholine + a fatty acid + H(+). PLA2 catalyzes the calcium-dependent hydrolysis of the 2-acyl groups in 3-sn-phosphoglycerides. The sequence is that of Basic phospholipase A2 pseudexin B chain from Pseudechis porphyriacus (Red-bellied black snake).